Reading from the N-terminus, the 263-residue chain is Small ribosomal subunit protein uS15m (263 aa).

The N-terminal 70 residues, 1–70 (MVLKSVFRST…VRQYARPSRK (70 aa)), are a transit peptide targeting the mitochondrion. The segment covering 238-251 (EREKQKAEEAERKK) has biased composition (basic and acidic residues). The segment at 238 to 263 (EREKQKAEEAERKKSSSSTNPQETAA) is disordered.

This sequence belongs to the universal ribosomal protein uS15 family. As to quaternary structure, component of the mitochondrial ribosome small subunit (28S) which comprises a 12S rRNA and about 30 distinct proteins.

The protein localises to the mitochondrion. This is Small ribosomal subunit protein uS15m (mrps15) from Danio rerio (Zebrafish).